The sequence spans 476 residues: Cytosolic iron-sulfur assembly component 3 (476 aa).

N-acetylalanine is present on alanine 2. 8 residues coordinate [4Fe-4S] cluster: cysteine 24, cysteine 71, cysteine 74, cysteine 77, cysteine 190, cysteine 246, cysteine 395, and cysteine 399.

It belongs to the NARF family. External component of the CIA complex. In the CIA complex, interacts directly with CIAO1 and MMS19.

In terms of biological role, component of the cytosolic iron-sulfur protein assembly (CIA) complex, a multiprotein complex that mediates the incorporation of iron-sulfur cluster into extramitochondrial Fe/S proteins. Seems to negatively regulate the level of HIF1A expression, although this effect could be indirect. This is Cytosolic iron-sulfur assembly component 3 from Bos taurus (Bovine).